Here is a 269-residue protein sequence, read N- to C-terminus: Glutamate racemase (269 aa).

Residues 11–12 and 43–44 each bind substrate; these read DS and YG. Cys74 acts as the Proton donor/acceptor in catalysis. 75 to 76 contacts substrate; the sequence is NT. Cys185 (proton donor/acceptor) is an active-site residue. 186–187 provides a ligand contact to substrate; that stretch reads TH.

The protein belongs to the aspartate/glutamate racemases family.

The enzyme catalyses L-glutamate = D-glutamate. Its pathway is cell wall biogenesis; peptidoglycan biosynthesis. In terms of biological role, provides the (R)-glutamate required for cell wall biosynthesis. This chain is Glutamate racemase, found in Bacillus cereus (strain ATCC 10987 / NRS 248).